The following is a 132-amino-acid chain: uncharacterized protein (132 aa).

2 WD repeats span residues 14–53 and 58–97; these read DLQDDISSVCCSPCNRYIIIASGNNCQHIYYLCATNLEIL and AHDDSIVHLVSTLDGKYIVSSGLDGLIKIWNFKTANLANV.

This is an uncharacterized protein from Acanthamoeba polyphaga (Amoeba).